The sequence spans 334 residues: Fructose-1,6-bisphosphatase class 1 (334 aa).

Glutamate 89, aspartate 112, leucine 114, and aspartate 115 together coordinate Mg(2+). Substrate contacts are provided by residues 115–118 (DGSS), asparagine 208, tyrosine 241, and lysine 271. Glutamate 277 provides a ligand contact to Mg(2+).

It belongs to the FBPase class 1 family. In terms of assembly, homotetramer. Mg(2+) serves as cofactor.

The protein localises to the cytoplasm. It catalyses the reaction beta-D-fructose 1,6-bisphosphate + H2O = beta-D-fructose 6-phosphate + phosphate. Its pathway is carbohydrate biosynthesis; gluconeogenesis. The protein is Fructose-1,6-bisphosphatase class 1 of Photorhabdus laumondii subsp. laumondii (strain DSM 15139 / CIP 105565 / TT01) (Photorhabdus luminescens subsp. laumondii).